A 98-amino-acid chain; its full sequence is DNA-binding protein Fis (98 aa).

The H-T-H motif DNA-binding region spans Q74–K93.

The protein belongs to the transcriptional regulatory Fis family. Homodimer.

In terms of biological role, activates ribosomal RNA transcription. Plays a direct role in upstream activation of rRNA promoters. This is DNA-binding protein Fis from Aliivibrio fischeri (strain ATCC 700601 / ES114) (Vibrio fischeri).